We begin with the raw amino-acid sequence, 82 residues long: Small ribosomal subunit protein uS17 (82 aa).

The protein belongs to the universal ribosomal protein uS17 family. In terms of assembly, part of the 30S ribosomal subunit.

In terms of biological role, one of the primary rRNA binding proteins, it binds specifically to the 5'-end of 16S ribosomal RNA. The chain is Small ribosomal subunit protein uS17 from Rhodopseudomonas palustris (strain BisA53).